A 485-amino-acid chain; its full sequence is Aspartyl/glutamyl-tRNA(Asn/Gln) amidotransferase subunit B (485 aa).

This sequence belongs to the GatB/GatE family. GatB subfamily. In terms of assembly, heterotrimer of A, B and C subunits.

It carries out the reaction L-glutamyl-tRNA(Gln) + L-glutamine + ATP + H2O = L-glutaminyl-tRNA(Gln) + L-glutamate + ADP + phosphate + H(+). The catalysed reaction is L-aspartyl-tRNA(Asn) + L-glutamine + ATP + H2O = L-asparaginyl-tRNA(Asn) + L-glutamate + ADP + phosphate + 2 H(+). Its function is as follows. Allows the formation of correctly charged Asn-tRNA(Asn) or Gln-tRNA(Gln) through the transamidation of misacylated Asp-tRNA(Asn) or Glu-tRNA(Gln) in organisms which lack either or both of asparaginyl-tRNA or glutaminyl-tRNA synthetases. The reaction takes place in the presence of glutamine and ATP through an activated phospho-Asp-tRNA(Asn) or phospho-Glu-tRNA(Gln). The sequence is that of Aspartyl/glutamyl-tRNA(Asn/Gln) amidotransferase subunit B from Bordetella avium (strain 197N).